The chain runs to 234 residues: Leucyl/phenylalanyl-tRNA--protein transferase (234 aa).

It belongs to the L/F-transferase family.

It localises to the cytoplasm. The enzyme catalyses N-terminal L-lysyl-[protein] + L-leucyl-tRNA(Leu) = N-terminal L-leucyl-L-lysyl-[protein] + tRNA(Leu) + H(+). The catalysed reaction is N-terminal L-arginyl-[protein] + L-leucyl-tRNA(Leu) = N-terminal L-leucyl-L-arginyl-[protein] + tRNA(Leu) + H(+). It carries out the reaction L-phenylalanyl-tRNA(Phe) + an N-terminal L-alpha-aminoacyl-[protein] = an N-terminal L-phenylalanyl-L-alpha-aminoacyl-[protein] + tRNA(Phe). In terms of biological role, functions in the N-end rule pathway of protein degradation where it conjugates Leu, Phe and, less efficiently, Met from aminoacyl-tRNAs to the N-termini of proteins containing an N-terminal arginine or lysine. This chain is Leucyl/phenylalanyl-tRNA--protein transferase, found in Escherichia coli O7:K1 (strain IAI39 / ExPEC).